Reading from the N-terminus, the 67-residue chain is Large ribosomal subunit protein uL29 (67 aa).

This sequence belongs to the universal ribosomal protein uL29 family.

The polypeptide is Large ribosomal subunit protein uL29 (Rhizorhabdus wittichii (strain DSM 6014 / CCUG 31198 / JCM 15750 / NBRC 105917 / EY 4224 / RW1) (Sphingomonas wittichii)).